The chain runs to 843 residues: Probable cleavage and polyadenylation specificity factor subunit 2 (843 aa).

The segment covering 414–425 (AEETRLRMERAR) has biased composition (basic and acidic residues). 2 disordered regions span residues 414-443 (AEETRLRMERARRQAQANESDDSDDDDIAA) and 691-753 (DKNR…TKGK). The span at 432-441 (ESDDSDDDDI) shows a compositional bias: acidic residues. Over residues 732–746 (SGKEVENGHTNDSRT) the composition is skewed to basic and acidic residues.

Belongs to the metallo-beta-lactamase superfamily. RNA-metabolizing metallo-beta-lactamase-like family. CPSF2/YSH1 subfamily. CPSF is a heterotetramer composed of four distinct subunits 160, 100, 70 and 30 kDa.

The protein resides in the nucleus. CPSF plays a key role in pre-mRNA 3'-end formation, recognizing the AAUAAA signal sequence and interacting with poly(A)polymerase and other factors to bring about cleavage and poly(A) addition. This Caenorhabditis elegans protein is Probable cleavage and polyadenylation specificity factor subunit 2 (cpsf-2).